The following is a 174-amino-acid chain: 3-hydroxydecanoyl-[acyl-carrier-protein] dehydratase (174 aa).

H71 is a catalytic residue.

This sequence belongs to the thioester dehydratase family. FabA subfamily. As to quaternary structure, homodimer.

The protein localises to the cytoplasm. It catalyses the reaction a (3R)-hydroxyacyl-[ACP] = a (2E)-enoyl-[ACP] + H2O. The catalysed reaction is (3R)-hydroxydecanoyl-[ACP] = (2E)-decenoyl-[ACP] + H2O. The enzyme catalyses (2E)-decenoyl-[ACP] = (3Z)-decenoyl-[ACP]. It functions in the pathway lipid metabolism; fatty acid biosynthesis. Its function is as follows. Necessary for the introduction of cis unsaturation into fatty acids. Catalyzes the dehydration of (3R)-3-hydroxydecanoyl-ACP to E-(2)-decenoyl-ACP and then its isomerization to Z-(3)-decenoyl-ACP. Can catalyze the dehydratase reaction for beta-hydroxyacyl-ACPs with saturated chain lengths up to 16:0, being most active on intermediate chain length. The polypeptide is 3-hydroxydecanoyl-[acyl-carrier-protein] dehydratase (Nitrobacter winogradskyi (strain ATCC 25391 / DSM 10237 / CIP 104748 / NCIMB 11846 / Nb-255)).